A 166-amino-acid polypeptide reads, in one-letter code: Large ribosomal subunit protein uL10 (166 aa).

It belongs to the universal ribosomal protein uL10 family. As to quaternary structure, part of the ribosomal stalk of the 50S ribosomal subunit. The N-terminus interacts with L11 and the large rRNA to form the base of the stalk. The C-terminus forms an elongated spine to which L12 dimers bind in a sequential fashion forming a multimeric L10(L12)X complex.

In terms of biological role, forms part of the ribosomal stalk, playing a central role in the interaction of the ribosome with GTP-bound translation factors. This is Large ribosomal subunit protein uL10 from Ureaplasma urealyticum serovar 10 (strain ATCC 33699 / Western).